Consider the following 241-residue polypeptide: Uridylate kinase (241 aa).

ATP is bound at residue 9–10 (GS). Gly44 contributes to the UMP binding site. Gly45 and Arg49 together coordinate ATP. UMP is bound by residues Asp66 and 114–120 (VVAGQTT). ATP is bound by residues Thr140, Phe146, and Asp149.

This sequence belongs to the UMP kinase family. Homohexamer.

It localises to the cytoplasm. The enzyme catalyses UMP + ATP = UDP + ADP. It participates in pyrimidine metabolism; CTP biosynthesis via de novo pathway; UDP from UMP (UMPK route): step 1/1. Its activity is regulated as follows. Inhibited by UTP. Its function is as follows. Catalyzes the reversible phosphorylation of UMP to UDP. This is Uridylate kinase from Halobacterium salinarum (strain ATCC 29341 / DSM 671 / R1).